Consider the following 332-residue polypeptide: L-lactate dehydrogenase A chain (332 aa).

NAD(+) is bound by residues 29 to 57 and R99; that span reads GMVG…MEDK. Residues R106, N138, and R169 each coordinate substrate. N138 contributes to the NAD(+) binding site. H193 (proton acceptor) is an active-site residue. T248 contacts substrate.

It belongs to the LDH/MDH superfamily. LDH family. As to quaternary structure, homotetramer.

Its subcellular location is the cytoplasm. It catalyses the reaction (S)-lactate + NAD(+) = pyruvate + NADH + H(+). The protein operates within fermentation; pyruvate fermentation to lactate; (S)-lactate from pyruvate: step 1/1. Interconverts simultaneously and stereospecifically pyruvate and lactate with concomitant interconversion of NADH and NAD(+). The chain is L-lactate dehydrogenase A chain (ldha) from Fundulus heteroclitus (Killifish).